A 526-amino-acid polypeptide reads, in one-letter code: Keratin, type I cytoskeletal 10 (526 aa).

Positions 1-16 (MSVRFSSNSRQYSSAR) are enriched in low complexity. The tract at residues 1–40 (MSVRFSSNSRQYSSARSGGGGGGGGGGSSIRVSSTKSSLG) is disordered. The segment at 1–144 (MSVRFSSNSR…GDGGGLLSGN (144 aa)) is head. Phosphoserine is present on residues serine 17, serine 38, serine 49, serine 52, and serine 169. A compositionally biased stretch (gly residues) spans 17-28 (SGGGGGGGGGGS). The coil 1A stretch occupies residues 145-180 (EKVTMQNLNDRLASYMNKVRDLEESNYELEGKIKEW). The region spanning 145–459 (EKVTMQNLND…SLLEGEGGYV (315 aa)) is the IF rod domain. The linker 1 stretch occupies residues 181–201 (YEKHGNSSQREPRDYSKYYKT). Residues 202-293 (IEDLKGQIVN…KNHEEEMKDL (92 aa)) are coil 1B. Residues 294–316 (QNVSTGDVNVEMNAAPGVDLTQL) are linker 12. The interval 317–455 (LNNMRNQYEQ…QTYRSLLEGE (139 aa)) is coil 2. Residues 456-526 (GGYVGNLQIT…IESETKKHFY (71 aa)) are tail.

Belongs to the intermediate filament family. As to quaternary structure, heterotetramer of two type I and two type II keratins. Heterodimer with KRT1. Two heterodimers of KRT1 and KRT10 form a heterotetramer. The KRT10 subunit in the heterotetramer is probably disulfide-linked.

The protein localises to the secreted. It localises to the extracellular space. Its subcellular location is the cell surface. It is found in the cytoplasm. Plays a role in the establishment of the epidermal barrier on plantar skin. Involved in the maintenance of cell layer development and keratin filament bundles in suprabasal cells of the epithelium. The polypeptide is Keratin, type I cytoskeletal 10 (Rattus norvegicus (Rat)).